Here is a 347-residue protein sequence, read N- to C-terminus: Microfibril-associated glycoprotein 3 (347 aa).

Positions 1–22 are cleaved as a signal peptide; sequence MKLHYCLCILLVVTFVPTALVL. Residues 23–139 lie on the Extracellular side of the membrane; that stretch reads EDVTPLGTNQ…TLRVIFTSGD (117 aa). N-linked (GlcNAc...) asparagine glycosylation is found at Asn-31, Asn-36, Asn-63, and Asn-103. Residues 47–130 form the Ig-like C2-type domain; that stretch reads AGSYSGDDVI…SPTRASYSVT (84 aa). A disulfide bridge connects residues Cys-68 and Cys-117. A helical transmembrane segment spans residues 140-160; sequence MSVYYMVVCLIAFTITLILNV. At 161 to 347 the chain is on the cytoplasmic side; it reads TRLCLMSTHL…SAEGSTHHRE (187 aa). The interval 280–347 is disordered; it reads NPELGRSNSP…SAEGSTHHRE (68 aa). Positions 311 to 331 are enriched in polar residues; the sequence is VHLQSETKSIGTDSQDSSHFS.

In terms of processing, glycosylated.

The protein resides in the cell membrane. Its function is as follows. Component of the elastin-associated microfibrils. This is Microfibril-associated glycoprotein 3 (Mfap3) from Rattus norvegicus (Rat).